A 382-amino-acid chain; its full sequence is Gap junction alpha-1 protein (382 aa).

Over 2–23 (GDWSALGKLLDKVQAYSTAGGK) the chain is Cytoplasmic. Ser-5 is modified (phosphoserine). The chain crosses the membrane as a helical span at residues 24–44 (VWLSVLFIFRILLLGTAVESA). Residues 45–76 (WGDEQSAFRCNTQQPGCENVCYDKSFPISHVR) lie on the Extracellular side of the membrane. 2 disulfides stabilise this stretch: Cys-54–Cys-192 and Cys-187–Cys-198. The chain crosses the membrane as a helical span at residues 77 to 97 (FWVLQIIFVSVPTLLYLAHVF). Topologically, residues 98–155 (YVMRKEEKLNKKEEELKVAQTDGANVDMHLKQIEIKKFKYGIEEHGKVKMRGGLLRTY) are cytoplasmic. Lys-144 participates in a covalent cross-link: Glycyl lysine isopeptide (Lys-Gly) (interchain with G-Cter in SUMO). Residues 156-176 (IISILFKSVFEVAFLLIQWYI) traverse the membrane as a helical segment. Over 177–207 (YGFSLSAVYTCKRDPCPHQVDCFLSRPTEKT) the chain is Extracellular. The helical transmembrane segment at 208-228 (IFIIFMLVVSLVSLALNIIEL) threads the bilayer. At 229-382 (FYVFFKGIKD…SRPRPDDLEI (154 aa)) the chain is on the cytoplasmic side. Residue Lys-237 forms a Glycyl lysine isopeptide (Lys-Gly) (interchain with G-Cter in SUMO) linkage. The tract at residues 244-382 (SDLYHATTGP…SRPRPDDLEI (139 aa)) is interaction with NOV. Tyr-247 bears the Phosphotyrosine mark. A phosphoserine mark is found at Ser-255, Ser-257, and Ser-262. Positions 264 to 382 (TYAYFNGCSS…SRPRPDDLEI (119 aa)) are interaction with UBQLN4. At Cys-271 the chain carries S-nitrosocysteine. Thr-275 is subject to Phosphothreonine. Phosphoserine occurs at positions 306 and 314. Residues 317–332 (QNRMGQAGSTISNSHA) are compositionally biased toward polar residues. A disordered region spans residues 317–382 (QNRMGQAGST…SRPRPDDLEI (66 aa)). Ser-325 carries the post-translational modification Phosphoserine; by CK1. Thr-326 is modified (phosphothreonine). A phosphoserine; by CK1 mark is found at Ser-328 and Ser-330. Ser-344 and Ser-365 each carry phosphoserine. The span at 362–374 (RPSSRASSRASSR) shows a compositional bias: low complexity. Phosphoserine; by PKC/PRKCG and PKC/PRKCD is present on Ser-368. A phosphoserine mark is found at Ser-369 and Ser-373.

The protein belongs to the connexin family. Alpha-type (group II) subfamily. A connexon is composed of a hexamer of connexins. Interacts with SGSM3. Interacts with RIC1/CIP150. Interacts with CNST and CSNK1D. Interacts (via C-terminus) with TJP1. Interacts (via C-terminus) with SRC (via SH3 domain). Interacts (not ubiquitinated) with UBQLN4 (via UBA domain). Interacts with NOV. Interacts with TMEM65. Interacts with ANK3/ANKG and PKP2. In terms of processing, phosphorylation at Ser-325, Ser-328 and Ser-330 by CK1 modulates gap junction assembly. Phosphorylated at Ser-368 by PRKCG; phosphorylation induces disassembly of gap junction plaques and inhibition of gap junction activity. Phosphorylation at Ser-368 by PRKCD triggers its internalization into small vesicles leading to proteasome-mediated degradation. Sumoylated with SUMO1, SUMO2 and SUMO3, which may regulate the level of functional Cx43 gap junctions at the plasma membrane. May be desumoylated by SENP1 or SENP2. Post-translationally, S-nitrosylation at Cys-271 is enriched at the muscle endothelial gap junction in arteries, it augments channel permeability and may regulate of smooth muscle cell to endothelial cell communication. In terms of processing, acetylated in the developing cortex; leading to delocalization from the cell membrane.

It localises to the cell membrane. The protein localises to the cell junction. Its subcellular location is the gap junction. It is found in the endoplasmic reticulum. Gap junction protein that acts as a regulator of bladder capacity. A gap junction consists of a cluster of closely packed pairs of transmembrane channels, the connexons, through which materials of low MW diffuse from one cell to a neighboring cell. May play a critical role in the physiology of hearing by participating in the recycling of potassium to the cochlear endolymph. Negative regulator of bladder functional capacity: acts by enhancing intercellular electrical and chemical transmission, thus sensitizing bladder muscles to cholinergic neural stimuli and causing them to contract. May play a role in cell growth inhibition through the regulation of NOV expression and localization. Plays an essential role in gap junction communication in the ventricles. In Erinaceus europaeus (Western European hedgehog), this protein is Gap junction alpha-1 protein (GJA1).